The primary structure comprises 218 residues: Ribose-5-phosphate isomerase A (218 aa).

Substrate is bound by residues 28 to 31 (TGST), 81 to 84 (DSAD), and 94 to 97 (KGGG). The active-site Proton acceptor is Glu-103. Lys-121 contributes to the substrate binding site.

Belongs to the ribose 5-phosphate isomerase family. Homodimer.

The catalysed reaction is aldehydo-D-ribose 5-phosphate = D-ribulose 5-phosphate. Its pathway is carbohydrate degradation; pentose phosphate pathway; D-ribose 5-phosphate from D-ribulose 5-phosphate (non-oxidative stage): step 1/1. In terms of biological role, catalyzes the reversible conversion of ribose-5-phosphate to ribulose 5-phosphate. This is Ribose-5-phosphate isomerase A from Buchnera aphidicola subsp. Baizongia pistaciae (strain Bp).